The sequence spans 1040 residues: Multidrug resistance protein MdtB (1040 aa).

12 helical membrane-spanning segments follow: residues 25-45, 347-367, 369-389, 396-416, 440-460, 472-492, 537-557, 869-889, 890-910, 911-931, 968-988, and 998-1018; these read LLMA…PVAA, LMLA…NIPA, IIPG…MVFL, LTLM…IVVI, IGFT…PLLF, FAVT…TLTP, WLTL…WIVI, LIVA…ESFI, HPIT…LALM, IAGS…IGIV, ILMT…STGV, and IAMV…TPVI.

The protein belongs to the resistance-nodulation-cell division (RND) (TC 2.A.6) family. MdtB subfamily. As to quaternary structure, part of a tripartite efflux system composed of MdtA, MdtB and MdtC. MdtB forms a heteromultimer with MdtC.

Its subcellular location is the cell inner membrane. This is Multidrug resistance protein MdtB from Salmonella arizonae (strain ATCC BAA-731 / CDC346-86 / RSK2980).